The sequence spans 501 residues: Cytokinin dehydrogenase 2 (501 aa).

The signal sequence occupies residues 1–22 (MANLRLMITLITVLMITKSSNG). Residues Asn-32 and Asn-51 are each glycosylated (N-linked (GlcNAc...) asparagine). Residues 53-226 (TTVTPGGVIC…TRARIVLDHA (174 aa)) enclose the FAD-binding PCMH-type domain. The FAD site is built by Ala-87, Gly-89, and Gly-91. His-92 carries the post-translational modification Pros-8alpha-FAD histidine. FAD-binding residues include Ser-93 and Gln-97. A glycan (N-linked (GlcNAc...) asparagine) is linked at Asn-107. Residues Asp-150, Thr-155, Ser-161, Ile-165, Ile-216, Tyr-460, Ser-495, and Gln-498 each contribute to the FAD site.

Belongs to the oxygen-dependent FAD-linked oxidoreductase family. Requires FAD as cofactor. In terms of tissue distribution, expressed in the shoot apex, in stipules, and occasionally in the most apical part of the inflorescence stems. Not detected in roots.

The protein localises to the endoplasmic reticulum. The protein resides in the secreted. It is found in the extracellular space. The catalysed reaction is N(6)-dimethylallyladenine + A + H2O = 3-methyl-2-butenal + adenine + AH2. Its function is as follows. Catalyzes the oxidation of cytokinins, a family of N(6)-substituted adenine derivatives that are plant hormones, where the substituent is an isopentenyl group. Modulates asymmetric cytokinin signaling in emerged lateral roots. Its activity determines cell elongation and number in emerged lateral roots and defines angular growth of lateral roots. This chain is Cytokinin dehydrogenase 2 (CKX2), found in Arabidopsis thaliana (Mouse-ear cress).